Consider the following 208-residue polypeptide: N-(5'-phosphoribosyl)anthranilate isomerase (208 aa).

The protein belongs to the TrpF family.

It catalyses the reaction N-(5-phospho-beta-D-ribosyl)anthranilate = 1-(2-carboxyphenylamino)-1-deoxy-D-ribulose 5-phosphate. It functions in the pathway amino-acid biosynthesis; L-tryptophan biosynthesis; L-tryptophan from chorismate: step 3/5. The polypeptide is N-(5'-phosphoribosyl)anthranilate isomerase (Chlamydia trachomatis serovar A (strain ATCC VR-571B / DSM 19440 / HAR-13)).